Consider the following 388-residue polypeptide: Fibrinogen- and Ig-binding protein (388 aa).

The first 41 residues, 1–41, serve as a signal peptide directing secretion; sequence MSKTNPNKLYSLRKLKTGTASVAVDLTVLGTGLANTTDVKA. 4 D repeats span residues 288–293, 294–299, 302–307, and 309–314; these read EKLEAE, AKALKE, AKQAEE, and AKLKAD. The tract at residues 308–362 is disordered; the sequence is LAKLKADKASGAQKPDTKPGNKEVPTRPSQTRTNTNKAPMAQTKRQLPSTGEETT. Basic and acidic residues predominate over residues 322-332; the sequence is PDTKPGNKEVP. Residues 334 to 362 are compositionally biased toward polar residues; it reads RPSQTRTNTNKAPMAQTKRQLPSTGEETT. Positions 354-358 match the LPXTG sorting signal motif; sequence LPSTG. Thr357 is subject to Pentaglycyl murein peptidoglycan amidated threonine. Positions 358–388 are cleaved as a propeptide — removed by sortase; it reads GEETTNPFFTAAALTVIASAGVLALKRKEEN.

Its subcellular location is the secreted. It is found in the cell wall. Its function is as follows. Binds IgG molecules of the Ig1, Ig2 and Ig4 subclasses, and also binds fibrinogen. The polypeptide is Fibrinogen- and Ig-binding protein (mrp4) (Streptococcus pyogenes).